The following is a 571-amino-acid chain: Proline--tRNA ligase (571 aa).

This sequence belongs to the class-II aminoacyl-tRNA synthetase family. ProS type 1 subfamily. As to quaternary structure, homodimer.

Its subcellular location is the cytoplasm. It catalyses the reaction tRNA(Pro) + L-proline + ATP = L-prolyl-tRNA(Pro) + AMP + diphosphate. In terms of biological role, catalyzes the attachment of proline to tRNA(Pro) in a two-step reaction: proline is first activated by ATP to form Pro-AMP and then transferred to the acceptor end of tRNA(Pro). As ProRS can inadvertently accommodate and process non-cognate amino acids such as alanine and cysteine, to avoid such errors it has two additional distinct editing activities against alanine. One activity is designated as 'pretransfer' editing and involves the tRNA(Pro)-independent hydrolysis of activated Ala-AMP. The other activity is designated 'posttransfer' editing and involves deacylation of mischarged Ala-tRNA(Pro). The misacylated Cys-tRNA(Pro) is not edited by ProRS. In Pseudomonas putida (strain ATCC 47054 / DSM 6125 / CFBP 8728 / NCIMB 11950 / KT2440), this protein is Proline--tRNA ligase.